Consider the following 580-residue polypeptide: Thymidine kinase (580 aa).

2 disordered regions span residues 1 to 60 (MAEG…KSVK) and 133 to 157 (VCGR…ASMG). The segment covering 137–149 (PPLPPPNHPPPAT) has biased composition (pro residues). ATP is bound at residue 260-267 (GVMGVGKS). Glutamate 287 serves as the catalytic Proton acceptor. Substrate is bound at residue glutamine 325. Residue arginine 415 participates in ATP binding. A substrate-binding site is contributed by arginine 421.

The protein belongs to the herpesviridae thymidine kinase family. Homodimer.

It catalyses the reaction thymidine + ATP = dTMP + ADP + H(+). Functionally, catalyzes the transfer of the gamma-phospho group of ATP to thymidine to generate dTMP in the salvage pathway of pyrimidine synthesis. The dTMP serves as a substrate for DNA polymerase during viral DNA replication. Allows the virus to be reactivated and to grow in non-proliferative cells lacking a high concentration of phosphorylated nucleic acid precursors. This Human herpesvirus 8 type P (isolate GK18) (HHV-8) protein is Thymidine kinase.